We begin with the raw amino-acid sequence, 411 residues long: Serine--tRNA ligase (411 aa).

Position 226 to 228 (226 to 228 (TSE)) interacts with L-serine. Position 257–259 (257–259 (RKE)) interacts with ATP. E280 is a binding site for L-serine. 344–347 (EISS) contributes to the ATP binding site. L-serine is bound at residue S379.

Belongs to the class-II aminoacyl-tRNA synthetase family. Type-1 seryl-tRNA synthetase subfamily. Homodimer. The tRNA molecule binds across the dimer.

Its subcellular location is the cytoplasm. The enzyme catalyses tRNA(Ser) + L-serine + ATP = L-seryl-tRNA(Ser) + AMP + diphosphate + H(+). The catalysed reaction is tRNA(Sec) + L-serine + ATP = L-seryl-tRNA(Sec) + AMP + diphosphate + H(+). It participates in aminoacyl-tRNA biosynthesis; selenocysteinyl-tRNA(Sec) biosynthesis; L-seryl-tRNA(Sec) from L-serine and tRNA(Sec): step 1/1. Catalyzes the attachment of serine to tRNA(Ser). Is also able to aminoacylate tRNA(Sec) with serine, to form the misacylated tRNA L-seryl-tRNA(Sec), which will be further converted into selenocysteinyl-tRNA(Sec). In Campylobacter jejuni subsp. jejuni serotype O:23/36 (strain 81-176), this protein is Serine--tRNA ligase.